Here is a 244-residue protein sequence, read N- to C-terminus: Claudin-12 (244 aa).

Topologically, residues Met1–Thr10 are cytoplasmic. The chain crosses the membrane as a helical span at residues Val11–Pro31. Residues Asn32–Gln87 are Extracellular-facing. A helical membrane pass occupies residues Phe88–Met108. The Cytoplasmic portion of the chain corresponds to Cys109–Val135. A helical membrane pass occupies residues Ala136–Phe156. The Extracellular portion of the chain corresponds to Tyr157–Ala174. The chain crosses the membrane as a helical span at residues Val175–Trp195. Over Tyr196 to Thr244 the chain is Cytoplasmic. Residues Ser228 and Ser231 each carry the phosphoserine modification.

The protein belongs to the claudin family. Interacts with OCLN.

Its subcellular location is the cell junction. It localises to the tight junction. It is found in the cell membrane. Its function is as follows. Plays a major role in tight junction-specific obliteration of the intercellular space, through calcium-independent cell-adhesion activity. In Mus musculus (Mouse), this protein is Claudin-12 (Cldn12).